A 1135-amino-acid polypeptide reads, in one-letter code: APC membrane recruitment protein 1 (1135 aa).

Methionine 1 carries the post-translational modification N-acetylmethionine. Disordered stretches follow at residues 1 to 115 (METQ…EGTG), 156 to 308 (AEKF…VGDP), 339 to 405 (SMTD…EDDD), 447 to 484 (GLAPGELLTPQSDQQESAPNSDEGYYDSTTPGFEDDSG), 736 to 764 (NFGGSPRRAYPTYSPPEDPEEEEVEKEGN), 921 to 948 (LQAQQEDSDEEDEEEEEGEWSRDSPLSL), and 1007 to 1135 (VPES…NLAK). Residues 10-19 (QAKGAAASGS) are compositionally biased toward low complexity. The span at 23-35 (QTAEKGAKNKAAE) shows a compositional bias: basic and acidic residues. The segment covering 36-50 (ATEGPTSEPSSSGPG) has biased composition (low complexity). Residues 73–83 (FGGGRSKGSGK) show a composition bias toward gly residues. Composition is skewed to basic and acidic residues over residues 94 to 107 (KTHDGLSEAAHGPE) and 196 to 208 (GPERVRARPHEHV). The segment covering 238–248 (KVSPTPEPSPP) has biased composition (pro residues). Residue serine 246 is modified to Phosphoserine. 2 stretches are compositionally biased toward basic and acidic residues: residues 253–262 (MACKDPEKPM) and 282–291 (EEPHSPETGE). Residues 373–405 (ALPDDDDEEEEEEEEVELEEEEEEVKEEEEDDD) are compositionally biased toward acidic residues. Over residues 455–466 (TPQSDQQESAPN) the composition is skewed to polar residues. Residues 926–938 (EDSDEEDEEEEEG) are compositionally biased toward acidic residues. Residues 1058–1069 (PSCSSSSGGFSP) are compositionally biased toward low complexity. The segment covering 1119–1135 (SLATSYSSTAMNGNLAK) has biased composition (polar residues).

Belongs to the Amer family. Interacts with CTNNB1, AXIN1, LRP6, KEAP1, APC and BTRC. Interacts with SCF (SKP1-CUL1-F-box protein) E3 ubiquitin-protein ligase complexes containing BTRC and/or FBXW11. Identified in the beta-catenin destruction complex containing CTNNB1, APC, AXIN1 and AXIN2. Interacts with WT1. In terms of tissue distribution, detected in fetal and adult kidney, brain and spleen.

It is found in the cytoplasm. It localises to the cell membrane. The protein resides in the nucleus. Its function is as follows. Regulator of the canonical Wnt signaling pathway. Acts by specifically binding phosphatidylinositol 4,5-bisphosphate (PtdIns(4,5)P2), translocating to the cell membrane and interacting with key regulators of the canonical Wnt signaling pathway, such as components of the beta-catenin destruction complex. Acts both as a positive and negative regulator of the Wnt signaling pathway, depending on the context: acts as a positive regulator by promoting LRP6 phosphorylation. Also acts as a negative regulator by acting as a scaffold protein for the beta-catenin destruction complex and promoting stabilization of Axin at the cell membrane. Promotes CTNNB1 ubiquitination and degradation. Involved in kidney development. The protein is APC membrane recruitment protein 1 (AMER1) of Homo sapiens (Human).